The primary structure comprises 63 residues: Conotoxin PnMRCL-0111 (63 aa).

Positions 1 to 22 (MHCLSVFVILLLLTASAPSVDA) are cleaved as a signal peptide. Positions 23–50 (QPKTEDDVPLSSFHDDLQRTVRTLLDIR) are excised as a propeptide. The residue at position 62 (tryptophan 62) is a Tryptophan amide.

This sequence belongs to the conotoxin T superfamily. Post-translationally, contains 2 disulfide bonds that can be either 'C1-C3, C2-C4' or 'C1-C4, C2-C3', since these disulfide connectivities have been observed for conotoxins with cysteine framework V (for examples, see AC P0DQQ7 and AC P81755). In terms of tissue distribution, expressed by the venom duct.

It localises to the secreted. The polypeptide is Conotoxin PnMRCL-0111 (Conus pennaceus (Feathered cone)).